Here is a 688-residue protein sequence, read N- to C-terminus: Glycine--tRNA ligase beta subunit (688 aa).

This sequence belongs to the class-II aminoacyl-tRNA synthetase family. In terms of assembly, tetramer of two alpha and two beta subunits.

It is found in the cytoplasm. The enzyme catalyses tRNA(Gly) + glycine + ATP = glycyl-tRNA(Gly) + AMP + diphosphate. The chain is Glycine--tRNA ligase beta subunit from Shewanella sp. (strain ANA-3).